The primary structure comprises 253 residues: Large ribosomal subunit protein mL57 (253 aa).

Residues 1–28 (MENSMMFISRSLRRPVTALNCNLQSVRT) constitute a mitochondrion transit peptide.

This sequence belongs to the ribonuclease III family. Mitochondrion-specific ribosomal protein mL57 subfamily. Component of the mitochondrial large ribosomal subunit (mt-LSU). Mature yeast 74S mitochondrial ribosomes consist of a small (37S) and a large (54S) subunit. The 37S small subunit contains a 15S ribosomal RNA (15S mt-rRNA) and 34 different proteins. The 54S large subunit contains a 21S rRNA (21S mt-rRNA) and 46 different proteins. mL57 forms a heterodimer with mL44 and stabilizes rRNA expansion segments 1/2 at a membrane-facing protuberance close to the point of attachment of the ribosome to the translocon in the membrane.

It localises to the mitochondrion. In terms of biological role, component of the mitochondrial ribosome (mitoribosome), a dedicated translation machinery responsible for the synthesis of mitochondrial genome-encoded proteins, including at least some of the essential transmembrane subunits of the mitochondrial respiratory chain. The mitoribosomes are attached to the mitochondrial inner membrane and translation products are cotranslationally integrated into the membrane. The protein is Large ribosomal subunit protein mL57 (MRPL15) of Saccharomyces cerevisiae (strain ATCC 204508 / S288c) (Baker's yeast).